A 1365-amino-acid polypeptide reads, in one-letter code: Histone-lysine N-methyltransferase NSD2 (1365 aa).

A phosphothreonine mark is found at Thr-110 and Thr-114. Ser-121 is subject to Phosphoserine. The tract at residues 149 to 170 (ADVSQSEENGQKPENKARRNRK) is disordered. Ser-172 is modified (phosphoserine). Residues 222-286 (VGDLVWSKVS…FEKSLVAFEG (65 aa)) enclose the PWWP 1 domain. Ser-376 is subject to Phosphoserine. Disordered stretches follow at residues 376 to 455 (SSGV…RKGD) and 516 to 658 (EDSG…SKKS). Thr-422 carries the post-translational modification Phosphothreonine. A DNA-binding region (HMG box) is located at residues 453–521 (KGDAASQFLV…VQAEEDSGNV (69 aa)). Position 544 is a phosphothreonine (Thr-544). Basic and acidic residues predominate over residues 552–567 (DKHSLRKRDTITDKTA). The segment covering 580–590 (SLKSQAATKNL) has biased composition (polar residues). Residues 606–622 (AASSALGFSKSSSPSAS) show a composition bias toward low complexity. Ser-614 carries the post-translational modification Phosphoserine. A compositionally biased stretch (acidic residues) spans 632–648 (PGDEPSESPYESADETQ). PHD-type zinc fingers lie at residues 667 to 713 (EYVC…CASG), 714 to 770 (IHSC…CHAS), and 831 to 875 (VSWC…CRAG). Positions 880–942 (FQDIIWVKLG…QARVFPYMEG (63 aa)) constitute a PWWP 2 domain. In terms of domain architecture, AWS spans 1011–1061 (SEIPKCNCKPTDENPCGFDSECLNRMLMFECHPQVCPAGEFCQNQCFTKRQ). Zn(2+) is bound by residues Cys-1016, Cys-1018, Cys-1026, Cys-1032, Cys-1041, Cys-1046, and Cys-1052. The 118-residue stretch at 1063–1180 (PETKIIKTDG…AGTELTFNYN (118 aa)) folds into the SET domain. S-adenosyl-L-methionine is bound by residues Trp-1075, 1115-1118 (THFY), and 1141-1142 (NH). Cys-1144 lines the Zn(2+) pocket. Asn-1186 is an S-adenosyl-L-methionine binding site. The Post-SET domain maps to 1187–1203 (EKTVCRCGASNCSGFLG). Cys-1191 is a Zn(2+) binding site. Arg-1192 is an S-adenosyl-L-methionine binding site. 2 residues coordinate Zn(2+): Cys-1193 and Cys-1198. The interval 1207 to 1232 (KTSTTLSSEEKGKKTKKKTRRRRAKG) is disordered. Basic residues predominate over residues 1219-1230 (KKTKKKTRRRRA). A PHD-type 4; atypical zinc finger spans residues 1239 to 1286 (EDECFRCGDGGQLVLCDRKFCTKAYHLSCLGLGKRPFGKWECPWHHCD). A disordered region spans residues 1333–1365 (VRSTKTEKPPPEPGKPKGKRRRRRGWRRVTEGK). Positions 1348–1359 (PKGKRRRRRGWR) are enriched in basic residues.

The protein belongs to the class V-like SAM-binding methyltransferase superfamily. Histone-lysine methyltransferase family. SET2 subfamily. In terms of assembly, interacts with HDAC1. Interacts (via PHD-type zinc fingers 1, 2 and 3) with SALL1. Interacts (via PHD-type 1, 2 and 3) with SALL4. Interacts with NANOG. Interacts with OGT. Interacts (via HMG box) with NKX2-5. Widely expressed. Predominantly expressed in thymus and testis.

It localises to the nucleus. The protein resides in the chromosome. Its subcellular location is the cytoplasm. It is found in the nucleolus. The catalysed reaction is L-lysyl(36)-[histone H3] + S-adenosyl-L-methionine = N(6)-methyl-L-lysyl(36)-[histone H3] + S-adenosyl-L-homocysteine + H(+). It catalyses the reaction L-lysyl(36)-[histone H3] + 2 S-adenosyl-L-methionine = N(6),N(6)-dimethyl-L-lysyl(36)-[histone H3] + 2 S-adenosyl-L-homocysteine + 2 H(+). Its function is as follows. Histone methyltransferase which specifically dimethylates nucleosomal histone H3 at 'Lys-36' (H3K36me2). Also monomethylates nucleosomal histone H3 at 'Lys-36' (H3K36me) in vitro. Does not trimethylate nucleosomal histone H3 at 'Lys-36' (H3K36me3). However, specifically trimethylates histone H3 at 'Lys-36' (H3K36me3) at euchromatic regions in embryonic stem (ES) cells. By methylating histone H3 at 'Lys-36', involved in the regulation of gene transcription during various biological processes. In ES cells, associates with developmental transcription factors such as SALL1 and represses inappropriate gene transcription mediated by histone deacetylation. During heart development, associates with transcription factor NKX2-5 to repress transcription of NKX2-5 target genes. Plays an essential role in adipogenesis, by regulating expression of genes involved in pre-adipocyte differentiation. During T-cell receptor (TCR) and CD28-mediated T-cell activation, promotes the transcription of transcription factor BCL6 which is required for follicular helper T (Tfh) cell differentiation. During B-cell development, required for the generation of the B1 lineage. During B2 cell activation, may contribute to the control of isotype class switch recombination (CRS), splenic germinal center formation, and the humoral immune response. Plays a role in class switch recombination of the immunoglobulin heavy chain (IgH) locus during B-cell activation. By regulating the methylation of histone H3 at 'Lys-36' and histone H4 at 'Lys-20' at the IgH locus, involved in TP53BP1 recruitment to the IgH switch region and promotes the transcription of IgA. Histone methyltransferase which specifically dimethylates nucleosomal histone H3 at 'Lys-36' (H3K36me2). In terms of biological role, histone methyltransferase which specifically dimethylates nucleosomal histone H3 at 'Lys-36' (H3K36me2). Methylation of histone H3 at 'Lys-27' is controversial. Mono-, di- or tri-methylates histone H3 at 'Lys-27' (H3K27me, H3K27me2 and H3K27me3). Does not methylate histone H3 at 'Lys-27'. May act as a transcription regulator that binds DNA and suppresses IL5 transcription through HDAC recruitment. This is Histone-lysine N-methyltransferase NSD2 from Homo sapiens (Human).